The primary structure comprises 247 residues: 2,3-bisphosphoglycerate-dependent phosphoglycerate mutase (247 aa).

Substrate is bound by residues 7-14 (RHGESEWN), 20-21 (TG), Arg59, 86-89 (ERHY), Lys97, 113-114 (RR), and 182-183 (GN). His8 functions as the Tele-phosphohistidine intermediate in the catalytic mechanism. Glu86 acts as the Proton donor/acceptor in catalysis.

It belongs to the phosphoglycerate mutase family. BPG-dependent PGAM subfamily.

It carries out the reaction (2R)-2-phosphoglycerate = (2R)-3-phosphoglycerate. It functions in the pathway carbohydrate degradation; glycolysis; pyruvate from D-glyceraldehyde 3-phosphate: step 3/5. In terms of biological role, catalyzes the interconversion of 2-phosphoglycerate and 3-phosphoglycerate. This chain is 2,3-bisphosphoglycerate-dependent phosphoglycerate mutase, found in Treponema denticola (strain ATCC 35405 / DSM 14222 / CIP 103919 / JCM 8153 / KCTC 15104).